The following is a 133-amino-acid chain: Small ribosomal subunit protein uS8 (133 aa).

The protein belongs to the universal ribosomal protein uS8 family. As to quaternary structure, part of the 30S ribosomal subunit. Contacts proteins S5 and S12.

Its function is as follows. One of the primary rRNA binding proteins, it binds directly to 16S rRNA central domain where it helps coordinate assembly of the platform of the 30S subunit. This is Small ribosomal subunit protein uS8 from Nostoc punctiforme (strain ATCC 29133 / PCC 73102).